We begin with the raw amino-acid sequence, 205 residues long: RFAHDPMAGGHRMWQMAGLKAQRAQTDVNNKQAAFDAAAKEKSDADAALSAAQERRKQKENKEKDAKDKLDKESKRNKPGKATGKGKPVGDKWLDDAGKDSGAPIPDRIADKLRDKEFKNFDDFRRKFWEEVSKDPELSKQFNPGNKKRLSQGLAPRARNKDTVGGRRSFELHHDKPISQDGGVYDMDNLRITTPKRHIDIHRGQ.

Disordered stretches follow at residues 24-109 and 136-187; these read AQTD…PDRI and PELS…VYDM. 3 stretches are compositionally biased toward basic and acidic residues: residues 53–76, 88–99, and 159–178; these read QERRKQKENKEKDAKDKLDKESKR, PVGDKWLDDAGK, and RNKDTVGGRRSFELHHDKPI. The Zn(2+) site is built by histidine 173, histidine 198, and histidine 202.

This sequence belongs to the colicin/pyosin nuclease family.

Functionally, this plasmid-coded bactericidal protein is an endonuclease active on both single- and double-stranded DNA but with undefined specificity. In terms of biological role, colicins are polypeptide toxins produced by and active against E.coli and closely related bacteria. The polypeptide is Colicin-E8 (col) (Escherichia coli).